A 285-amino-acid chain; its full sequence is Kanamycin B dioxygenase (285 aa).

The protein belongs to the PhyH family. Fe cation is required as a cofactor.

It carries out the reaction kanamycin B + 2-oxoglutarate + O2 = 2'-dehydrokanamycin A + succinate + NH4(+) + CO2. It participates in antibiotic biosynthesis; kanamycin biosynthesis. Mediates the conversion of kanamycin B into 2'-dehydrokanamycin A during the transformation of kanamycin B to kanamycin A. The chain is Kanamycin B dioxygenase (kanJ) from Streptomyces kanamyceticus.